A 168-amino-acid polypeptide reads, in one-letter code: Ribosome maturation factor RimP (168 aa).

It belongs to the RimP family.

The protein localises to the cytoplasm. Its function is as follows. Required for maturation of 30S ribosomal subunits. The sequence is that of Ribosome maturation factor RimP from Mycoplasma mobile (strain ATCC 43663 / 163K / NCTC 11711) (Mesomycoplasma mobile).